The primary structure comprises 105 residues: Large ribosomal subunit protein uL24 (105 aa).

This sequence belongs to the universal ribosomal protein uL24 family. In terms of assembly, part of the 50S ribosomal subunit.

One of two assembly initiator proteins, it binds directly to the 5'-end of the 23S rRNA, where it nucleates assembly of the 50S subunit. Its function is as follows. One of the proteins that surrounds the polypeptide exit tunnel on the outside of the subunit. The polypeptide is Large ribosomal subunit protein uL24 (Halorhodospira halophila (strain DSM 244 / SL1) (Ectothiorhodospira halophila (strain DSM 244 / SL1))).